A 387-amino-acid polypeptide reads, in one-letter code: Phosphoglycerate kinase (387 aa).

Substrate is bound by residues 21–23 (DLN), R36, 59–62 (HLGR), R113, and R146. ATP contacts are provided by residues K197, E314, and 340–343 (GGDT).

Belongs to the phosphoglycerate kinase family. Monomer.

It localises to the cytoplasm. The catalysed reaction is (2R)-3-phosphoglycerate + ATP = (2R)-3-phospho-glyceroyl phosphate + ADP. The protein operates within carbohydrate degradation; glycolysis; pyruvate from D-glyceraldehyde 3-phosphate: step 2/5. The protein is Phosphoglycerate kinase of Pseudomonas aeruginosa (strain ATCC 15692 / DSM 22644 / CIP 104116 / JCM 14847 / LMG 12228 / 1C / PRS 101 / PAO1).